Here is a 51-residue protein sequence, read N- to C-terminus: uncharacterized protein (51 aa).

The protein to E.coli YdfA.

This is an uncharacterized protein from Escherichia coli O157:H7.